Reading from the N-terminus, the 380-residue chain is N5-carboxyaminoimidazole ribonucleotide synthase (380 aa).

ATP-binding positions include R108, K148, G153–Q159, E183–V186, E191, H214, and N268–E269. The ATP-grasp domain occupies K112–C298.

The protein belongs to the PurK/PurT family. As to quaternary structure, homodimer.

The enzyme catalyses 5-amino-1-(5-phospho-beta-D-ribosyl)imidazole + hydrogencarbonate + ATP = 5-carboxyamino-1-(5-phospho-D-ribosyl)imidazole + ADP + phosphate + 2 H(+). It functions in the pathway purine metabolism; IMP biosynthesis via de novo pathway; 5-amino-1-(5-phospho-D-ribosyl)imidazole-4-carboxylate from 5-amino-1-(5-phospho-D-ribosyl)imidazole (N5-CAIR route): step 1/2. In terms of biological role, catalyzes the ATP-dependent conversion of 5-aminoimidazole ribonucleotide (AIR) and HCO(3)(-) to N5-carboxyaminoimidazole ribonucleotide (N5-CAIR). The chain is N5-carboxyaminoimidazole ribonucleotide synthase from Bacillus subtilis (strain 168).